Reading from the N-terminus, the 480-residue chain is Thiamine biosynthesis bifunctional protein ThiM/ThiE (480 aa).

Residues 1-287 (MSTLPERVRE…LYVLVSGATP (287 aa)) form a hydroxyethylthiazole kinase region. Methionine 40 provides a ligand contact to 5-(2-hydroxyethyl)-4-methylthiazole. The ATP site is built by arginine 116 and threonine 164. Glycine 191 is a binding site for 5-(2-hydroxyethyl)-4-methylthiazole. The tract at residues 288 to 480 (PDVLEAVLQA…VRRAKGEVSA (193 aa)) is thiamine-phosphate synthase. Residues 303 to 307 (QFREK) and asparagine 335 each bind 4-amino-2-methyl-5-(diphosphooxymethyl)pyrimidine. Aspartate 336 and aspartate 355 together coordinate Mg(2+). Threonine 374 is a binding site for 4-amino-2-methyl-5-(diphosphooxymethyl)pyrimidine. 400-402 (TPS) provides a ligand contact to 2-[(2R,5Z)-2-carboxy-4-methylthiazol-5(2H)-ylidene]ethyl phosphate. Lysine 403 serves as a coordination point for 4-amino-2-methyl-5-(diphosphooxymethyl)pyrimidine. Residues glycine 431 and 451–452 (IS) contribute to the 2-[(2R,5Z)-2-carboxy-4-methylthiazol-5(2H)-ylidene]ethyl phosphate site.

This sequence in the N-terminal section; belongs to the Thz kinase family. The protein in the C-terminal section; belongs to the thiamine-phosphate synthase family. Mg(2+) serves as cofactor.

It carries out the reaction 5-(2-hydroxyethyl)-4-methylthiazole + ATP = 4-methyl-5-(2-phosphooxyethyl)-thiazole + ADP + H(+). The enzyme catalyses 2-[(2R,5Z)-2-carboxy-4-methylthiazol-5(2H)-ylidene]ethyl phosphate + 4-amino-2-methyl-5-(diphosphooxymethyl)pyrimidine + 2 H(+) = thiamine phosphate + CO2 + diphosphate. It catalyses the reaction 2-(2-carboxy-4-methylthiazol-5-yl)ethyl phosphate + 4-amino-2-methyl-5-(diphosphooxymethyl)pyrimidine + 2 H(+) = thiamine phosphate + CO2 + diphosphate. The catalysed reaction is 4-methyl-5-(2-phosphooxyethyl)-thiazole + 4-amino-2-methyl-5-(diphosphooxymethyl)pyrimidine + H(+) = thiamine phosphate + diphosphate. It participates in cofactor biosynthesis; thiamine diphosphate biosynthesis; 4-methyl-5-(2-phosphoethyl)-thiazole from 5-(2-hydroxyethyl)-4-methylthiazole: step 1/1. The protein operates within cofactor biosynthesis; thiamine diphosphate biosynthesis; thiamine phosphate from 4-amino-2-methyl-5-diphosphomethylpyrimidine and 4-methyl-5-(2-phosphoethyl)-thiazole: step 1/1. In terms of biological role, condenses 4-methyl-5-(beta-hydroxyethyl)thiazole monophosphate (THZ-P) and 2-methyl-4-amino-5-hydroxymethyl pyrimidine pyrophosphate (HMP-PP) to form thiamine monophosphate (TMP). This is Thiamine biosynthesis bifunctional protein ThiM/ThiE (thiM/thiE) from Symbiobacterium thermophilum (strain DSM 24528 / JCM 14929 / IAM 14863 / T).